Consider the following 268-residue polypeptide: MKFAVIGNPISHSLSPVMHRANFNSLGLDDTYEALNIPIEDFHLIKEIISKKELDGFNITIPHKERIIPYLDHVDEQAINAGAVNTVLIKDDKWIGYNTDGIGYVKGLHSVYPDLENAYILILGAGGASKGIAYELAKFVKPKLTVANRTMARFESWNLNINQISLADAEKYLAEFDIVINTTPAGMAGNNESIINLKHLSPNTLMSDIVYIPYKTPILEEAERKGNHIYNGLDMFVYQGAESFKIWTNKDADINSMKTAVLQQLKGE.

Shikimate-binding positions include 13 to 15 and Thr-60; that span reads SLS. Lys-64 functions as the Proton acceptor in the catalytic mechanism. Glu-76 lines the NADP(+) pocket. Shikimate is bound by residues Asn-85 and Asp-100. NADP(+) contacts are provided by residues 124 to 128, 148 to 153, and Ile-209; these read GAGGA and NRTMAR. Tyr-211 lines the shikimate pocket. Gly-232 contributes to the NADP(+) binding site.

This sequence belongs to the shikimate dehydrogenase family. In terms of assembly, homodimer.

It catalyses the reaction shikimate + NADP(+) = 3-dehydroshikimate + NADPH + H(+). Its pathway is metabolic intermediate biosynthesis; chorismate biosynthesis; chorismate from D-erythrose 4-phosphate and phosphoenolpyruvate: step 4/7. Its function is as follows. Involved in the biosynthesis of the chorismate, which leads to the biosynthesis of aromatic amino acids. Catalyzes the reversible NADPH linked reduction of 3-dehydroshikimate (DHSA) to yield shikimate (SA). The sequence is that of Shikimate dehydrogenase (NADP(+)) from Staphylococcus aureus (strain MSSA476).